We begin with the raw amino-acid sequence, 173 residues long: Dual-action ribosomal maturation protein DarP (173 aa).

Belongs to the DarP family.

The protein localises to the cytoplasm. Member of a network of 50S ribosomal subunit biogenesis factors which assembles along the 30S-50S interface, preventing incorrect 23S rRNA structures from forming. Promotes peptidyl transferase center (PTC) maturation. The chain is Dual-action ribosomal maturation protein DarP from Pseudomonas putida (strain GB-1).